Reading from the N-terminus, the 299-residue chain is ATP phosphoribosyltransferase (299 aa).

It belongs to the ATP phosphoribosyltransferase family. Long subfamily. Requires Mg(2+) as cofactor.

It localises to the cytoplasm. It catalyses the reaction 1-(5-phospho-beta-D-ribosyl)-ATP + diphosphate = 5-phospho-alpha-D-ribose 1-diphosphate + ATP. Its pathway is amino-acid biosynthesis; L-histidine biosynthesis; L-histidine from 5-phospho-alpha-D-ribose 1-diphosphate: step 1/9. With respect to regulation, feedback inhibited by histidine. In terms of biological role, catalyzes the condensation of ATP and 5-phosphoribose 1-diphosphate to form N'-(5'-phosphoribosyl)-ATP (PR-ATP). Has a crucial role in the pathway because the rate of histidine biosynthesis seems to be controlled primarily by regulation of HisG enzymatic activity. This chain is ATP phosphoribosyltransferase, found in Campylobacter jejuni subsp. jejuni serotype O:23/36 (strain 81-176).